Consider the following 179-residue polypeptide: Large ribosomal subunit protein uL6 (179 aa).

The protein belongs to the universal ribosomal protein uL6 family. In terms of assembly, part of the 50S ribosomal subunit.

Its function is as follows. This protein binds to the 23S rRNA, and is important in its secondary structure. It is located near the subunit interface in the base of the L7/L12 stalk, and near the tRNA binding site of the peptidyltransferase center. The sequence is that of Large ribosomal subunit protein uL6 from Spiroplasma kunkelii.